A 250-amino-acid polypeptide reads, in one-letter code: Phosphoribosylaminoimidazole-succinocarboxamide synthase (250 aa).

This sequence belongs to the SAICAR synthetase family.

It carries out the reaction 5-amino-1-(5-phospho-D-ribosyl)imidazole-4-carboxylate + L-aspartate + ATP = (2S)-2-[5-amino-1-(5-phospho-beta-D-ribosyl)imidazole-4-carboxamido]succinate + ADP + phosphate + 2 H(+). It participates in purine metabolism; IMP biosynthesis via de novo pathway; 5-amino-1-(5-phospho-D-ribosyl)imidazole-4-carboxamide from 5-amino-1-(5-phospho-D-ribosyl)imidazole-4-carboxylate: step 1/2. The protein is Phosphoribosylaminoimidazole-succinocarboxamide synthase of Bifidobacterium adolescentis (strain ATCC 15703 / DSM 20083 / NCTC 11814 / E194a).